We begin with the raw amino-acid sequence, 169 residues long: Cell division inhibitor SulA (169 aa).

Residues 106–112 (ALRTGNY) form a ftsZ binding region. A lon protease binding region spans residues 162 to 169 (KIHSNLYH).

This sequence belongs to the SulA family. As to quaternary structure, interacts with FtsZ. Post-translationally, is rapidly cleaved and degraded by the Lon protease once DNA damage is repaired.

Its function is as follows. Component of the SOS system and an inhibitor of cell division. Accumulation of SulA causes rapid cessation of cell division and the appearance of long, non-septate filaments. In the presence of GTP, binds a polymerization-competent form of FtsZ in a 1:1 ratio, thus inhibiting FtsZ polymerization and therefore preventing it from participating in the assembly of the Z ring. This mechanism prevents the premature segregation of damaged DNA to daughter cells during cell division. The polypeptide is Cell division inhibitor SulA (Citrobacter koseri (strain ATCC BAA-895 / CDC 4225-83 / SGSC4696)).